Here is a 342-residue protein sequence, read N- to C-terminus: D-alanine--D-alanine ligase (342 aa).

In terms of domain architecture, ATP-grasp spans 132–326 (KLYAKECGIE…VAKHLPKSKN (195 aa)). 159-210 (EYPVIIKPNHLGSSIGVSVVYDSSELEYALDVAFEFDDEVLIEPFIEGIEEY) is an ATP binding site. Residues Asp-282, Glu-294, and Asn-296 each contribute to the Mg(2+) site.

This sequence belongs to the D-alanine--D-alanine ligase family. Mg(2+) is required as a cofactor. Requires Mn(2+) as cofactor.

Its subcellular location is the cytoplasm. It carries out the reaction 2 D-alanine + ATP = D-alanyl-D-alanine + ADP + phosphate + H(+). The protein operates within cell wall biogenesis; peptidoglycan biosynthesis. In terms of biological role, cell wall formation. The protein is D-alanine--D-alanine ligase of Nitratiruptor sp. (strain SB155-2).